The primary structure comprises 290 residues: MSFVAYEELIKEGDTAILSLGHGSMVAVRVQRGAQTQTRHGVLRHSVDLIGRPFGSKVICSRGGWVYVLHPTPELWTVNLPHRTQILYSTDIALITMMLELRPGSVVCESGTGSGSVSHAIIRSVAPTGHLHTVEFHQQRADKAREEFQEHRLSQWVTVHTQDVCCSGFGVVHVADAVFLDIPSPWEAVGHAWDALKVEGGRFCSFSPCIEQVQRTCQALAAHGFTELSTLEVLPQVYNVRTVSLPLPDLGANNLETNMGSDASPFRSGTPMKETVGHTGYLTFATKTPG.

Ser-2 is subject to N-acetylserine. 5 substrate regions span residues Leu-20–His-22, Gln-35–Val-42, Gly-64–Trp-65, Gln-85–Ser-89, and Ser-110–Val-117. S-adenosyl-L-methionine contacts are provided by residues Leu-87, Ser-114 to Ser-116, Glu-135, Arg-140, Asp-163 to Val-164, and Asp-181. Substrate regions lie at residues Leu-180 to Pro-183 and Ser-205 to Gln-212. A Phosphoserine modification is found at Ser-264. Residue Thr-279 coordinates substrate.

It belongs to the class I-like SAM-binding methyltransferase superfamily. TRM61 family. As to quaternary structure, heterotetramer; composed of two copies of TRMT6 and two copies of TRMT61A.

The protein resides in the nucleus. It carries out the reaction adenosine(58) in tRNA + S-adenosyl-L-methionine = N(1)-methyladenosine(58) in tRNA + S-adenosyl-L-homocysteine + H(+). The catalysed reaction is an adenosine in mRNA + S-adenosyl-L-methionine = an N(1)-methyladenosine in mRNA + S-adenosyl-L-homocysteine + H(+). Functionally, catalytic subunit of tRNA (adenine-N(1)-)-methyltransferase, which catalyzes the formation of N(1)-methyladenine at position 58 (m1A58) in initiator methionyl-tRNA. Catalytic subunit of mRNA N(1)-methyltransferase complex, which mediates methylation of adenosine residues at the N(1) position of a small subset of mRNAs: N(1) methylation takes place in tRNA T-loop-like structures of mRNAs and is only present at low stoichiometries. The chain is tRNA (adenine(58)-N(1))-methyltransferase catalytic subunit TRMT61A (Trmt61a) from Mus musculus (Mouse).